The sequence spans 178 residues: ATP synthase subunit delta (178 aa).

It belongs to the ATPase delta chain family. In terms of assembly, F-type ATPases have 2 components, F(1) - the catalytic core - and F(0) - the membrane proton channel. F(1) has five subunits: alpha(3), beta(3), gamma(1), delta(1), epsilon(1). F(0) has three main subunits: a(1), b(2) and c(10-14). The alpha and beta chains form an alternating ring which encloses part of the gamma chain. F(1) is attached to F(0) by a central stalk formed by the gamma and epsilon chains, while a peripheral stalk is formed by the delta and b chains.

It is found in the cell membrane. Its function is as follows. F(1)F(0) ATP synthase produces ATP from ADP in the presence of a proton or sodium gradient. F-type ATPases consist of two structural domains, F(1) containing the extramembraneous catalytic core and F(0) containing the membrane proton channel, linked together by a central stalk and a peripheral stalk. During catalysis, ATP synthesis in the catalytic domain of F(1) is coupled via a rotary mechanism of the central stalk subunits to proton translocation. This protein is part of the stalk that links CF(0) to CF(1). It either transmits conformational changes from CF(0) to CF(1) or is implicated in proton conduction. This is ATP synthase subunit delta from Geobacillus stearothermophilus (Bacillus stearothermophilus).